A 528-amino-acid polypeptide reads, in one-letter code: Tubulin-specific chaperone E (528 aa).

The 45-residue stretch at 27 to 71 (GLVPPVAGLWLGVEWDNPERGKHDGSHEGTVYFKCRHPTAGSFIR) folds into the CAP-Gly domain. LRR repeat units lie at residues 152–176 (CPNIRSIDLSKNLLSSWEEVIDIAD), 178–206 (LKHLEVLNLSENKLTSPSSSPSPTGTFPT), 207–229 (LKVLVLNRTGVTWAEVLRCASGW), 231–253 (VLEKLYLESNNIIISERPTDVLQ), 254–274 (TVKLLDLSSNQLIDENQLFLI), 279–300 (RLEQLILSDIGISSIHFPDAGI), and 309–330 (SLQYLVLNDNQIAQWSFMNELD). Positions 343–385 (NPLTEGSKDAQTTRQFIIARIGQLRTLNKCAIEPEERRGAELD) constitute an LRRCT domain. An N6-acetyllysine modification is found at Lys464. Ser496 carries the post-translational modification Phosphoserine.

The protein belongs to the TBCE family. As to quaternary structure, supercomplex made of cofactors A to E. Cofactors A and D function by capturing and stabilizing tubulin in a quasi-native conformation. Cofactor E binds to the cofactor D-tubulin complex; interaction with cofactor C then causes the release of tubulin polypeptides that are committed to the native state. Cofactors B and E can form a heterodimer which binds to alpha-tubulin and enhances their ability to dissociate tubulin heterodimers. Interacts with TBCD.

Its subcellular location is the cytoplasm. The protein localises to the cytoskeleton. Tubulin-folding protein; involved in the second step of the tubulin folding pathway and in the regulation of tubulin heterodimer dissociation. Required for correct organization of microtubule cytoskeleton and mitotic splindle, and maintenance of the neuronal microtubule network. The chain is Tubulin-specific chaperone E (TBCE) from Bos taurus (Bovine).